The sequence spans 334 residues: D-aspartate oxidase 1 (334 aa).

5 residues coordinate FAD: aspartate 35, arginine 36, serine 43, glycine 307, and threonine 312. The Microbody targeting signal signature appears at 332-334 (SKL).

The protein belongs to the DAMOX/DASOX family. It depends on FAD as a cofactor. Expressed in the intestinal cells, hypodermis and in unidentified cells in the head in adult hermaphrodites.

It is found in the peroxisome matrix. It carries out the reaction D-aspartate + O2 + H2O = oxaloacetate + H2O2 + NH4(+). It catalyses the reaction D-glutamate + O2 + H2O = H2O2 + 2-oxoglutarate + NH4(+). With respect to regulation, not inhibited by potassium bromide or thiolactomycin. In terms of biological role, selectively catalyzes the oxidative deamination of acidic amino acids. May play a role in the egg-laying events and early development of the worm, in addition to quality control of the germ cells. This Caenorhabditis elegans protein is D-aspartate oxidase 1 (ddo-1).